Here is a 61-residue protein sequence, read N- to C-terminus: MLSVQLITPSSHGTAHLPRDDTDAAAGEILEFLCPFFCIGGIGDEYCDCQEKRDLDLFTDQ.

2 consecutive propeptides follow at residues 1–19 (MLSVQLITPSSHGTAHLPR) and 52–61 (KRDLDLFTDQ).

Post-translationally, mostly non-hydroxylated. In terms of processing, contains 2 disulfide bonds. In terms of tissue distribution, expressed by the venom duct.

It localises to the secreted. Its function is as follows. Probable toxin that inhibits ion channels. This is Conotoxin Am14.1 from Conus amadis (Amadis cone).